The primary structure comprises 374 residues: Phosphatidyl-myo-inositol mannosyltransferase (374 aa).

Residues Y9 and G16 each contribute to the GDP-alpha-D-mannose site. A 1,2-diacyl-sn-glycero-3-phospho-(1D-myo-inositol) contacts are provided by residues Q18, 62–63 (YN), and R68. GDP-alpha-D-mannose-binding positions include R196, 201–202 (RK), 251–253 (VDD), K256, 274–278 (ESFGI), and E282.

Belongs to the glycosyltransferase group 1 family. Glycosyltransferase 4 subfamily. Monomer. Mg(2+) serves as cofactor.

It is found in the cell membrane. It carries out the reaction a 1,2-diacyl-sn-glycero-3-phospho-(1D-myo-inositol) + GDP-alpha-D-mannose = a 1,2-diacyl-sn-glycero-3-phospho-[alpha-D-mannopyranosyl-(1&lt;-&gt;6)-D-myo-inositol] + GDP + H(+). It participates in phospholipid metabolism; phosphatidylinositol metabolism. In terms of biological role, involved in the biosynthesis of phosphatidyl-myo-inositol mannosides (PIM) which are early precursors in the biosynthesis of lipomannans (LM) and lipoarabinomannans (LAM). Catalyzes the addition of a mannosyl residue from GDP-D-mannose (GDP-Man) to the position 2 of the carrier lipid phosphatidyl-myo-inositol (PI) to generate a phosphatidyl-myo-inositol bearing an alpha-1,2-linked mannose residue (PIM1). This chain is Phosphatidyl-myo-inositol mannosyltransferase, found in Mycobacterium leprae (strain TN).